A 430-amino-acid chain; its full sequence is Cell division protein FtsZ (430 aa).

GTP contacts are provided by residues 76–80 (GGGCN), 163–165 (GTG), Glu-194, Arg-198, and Asp-242. Residues 374–418 (KEKPQAKTSSKPVLSGPPAGVETVPSTTTPEDPLGEIPMAPELDI) form a disordered region.

The protein belongs to the FtsZ family. Homodimer. Polymerizes to form a dynamic ring structure in a strictly GTP-dependent manner. Interacts directly with several other division proteins.

It is found in the cytoplasm. Essential cell division protein that forms a contractile ring structure (Z ring) at the future cell division site. The regulation of the ring assembly controls the timing and the location of cell division. One of the functions of the FtsZ ring is to recruit other cell division proteins to the septum to produce a new cell wall between the dividing cells. Binds GTP and shows GTPase activity. The chain is Cell division protein FtsZ from Synechocystis sp. (strain ATCC 27184 / PCC 6803 / Kazusa).